Here is a 173-residue protein sequence, read N- to C-terminus: MSFASRNIGRKIAGVGVDIVYLPRFAHILEKYSPFDPCGRSTLNKITRKFMHEKERFHFSNLLIEENCLTPRLHEYIAGVWALKECSLKALCCCVSKHDLPPAQVLYAGMLYKTQTDTGVPQLEFDKMFGKKYPKYQQLSKNYDSLFSTHEFLVSLSHDKDYLIAVTNLVERE.

It belongs to the P-Pant transferase superfamily. AcpS family.

Its subcellular location is the mitochondrion. It catalyses the reaction apo-[ACP] + CoA = holo-[ACP] + adenosine 3',5'-bisphosphate + H(+). Transfers the 4'-phosphopantetheine moiety from coenzyme A to a Ser of mitochondrial acyl-carrier-protein. This chain is Mitochondrial holo-[acyl-carrier-protein] synthase (PPT2), found in Saccharomyces cerevisiae (strain ATCC 204508 / S288c) (Baker's yeast).